The following is a 349-amino-acid chain: GTPase Obg (349 aa).

Positions 1–159 (MKFLDEAKVY…RWIWLRLKLI (159 aa)) constitute an Obg domain. The region spanning 160-327 (ADAGLVGLPN…ALRALVEVIG (168 aa)) is the OBG-type G domain. GTP is bound by residues 166-173 (GLPNAGKS), 191-195 (FTTLH), 212-215 (DIPG), 279-282 (NKID), and 308-310 (SGV). Mg(2+) contacts are provided by serine 173 and threonine 193.

The protein belongs to the TRAFAC class OBG-HflX-like GTPase superfamily. OBG GTPase family. In terms of assembly, monomer. Mg(2+) is required as a cofactor.

It localises to the cytoplasm. Functionally, an essential GTPase which binds GTP, GDP and possibly (p)ppGpp with moderate affinity, with high nucleotide exchange rates and a fairly low GTP hydrolysis rate. Plays a role in control of the cell cycle, stress response, ribosome biogenesis and in those bacteria that undergo differentiation, in morphogenesis control. This is GTPase Obg from Rhodopseudomonas palustris (strain BisB18).